Here is a 1888-residue protein sequence, read N- to C-terminus: Protein mms22 (1888 aa).

Disordered stretches follow at residues 12–34 (DSQDSGSEWSNTHGSLISQRGNE), 151–258 (FSSD…ISSN), and 316–354 (RRKLHPRSTAKLSSELGNEISDSDNSISTPTPTDDSRFD). 3 stretches are compositionally biased toward polar residues: residues 13-32 (SQDSGSEWSNTHGSLISQRG), 212-227 (SNLNTADNDLALSSTI), and 338-348 (SDNSISTPTPT).

The protein belongs to the MMS22 family.

It is found in the nucleus. Involved in protection against replication-dependent DNA damage. May act by restoring active replication forks, repairing unusual DNA structures, and/or preventing aberrant DNA rearrangement at arrested replication forks. The sequence is that of Protein mms22 (mus7) from Schizosaccharomyces pombe (strain 972 / ATCC 24843) (Fission yeast).